A 465-amino-acid polypeptide reads, in one-letter code: Cysteine--tRNA ligase (465 aa).

Cysteine 29 serves as a coordination point for Zn(2+). Positions 31-41 (PTVYNYIHIGN) match the 'HIGH' region motif. The Zn(2+) site is built by cysteine 209, histidine 234, and glutamate 238. Residues 266–270 (KMSKS) carry the 'KMSKS' region motif. ATP is bound at residue lysine 269. Position 270 is a phosphoserine (serine 270).

It belongs to the class-I aminoacyl-tRNA synthetase family. Monomer. Zn(2+) is required as a cofactor.

It is found in the cytoplasm. It catalyses the reaction tRNA(Cys) + L-cysteine + ATP = L-cysteinyl-tRNA(Cys) + AMP + diphosphate. The protein is Cysteine--tRNA ligase of Anoxybacillus flavithermus (strain DSM 21510 / WK1).